Consider the following 156-residue polypeptide: Small ribosomal subunit protein uS7 (156 aa).

Belongs to the universal ribosomal protein uS7 family. Part of the 30S ribosomal subunit. Contacts proteins S9 and S11.

Functionally, one of the primary rRNA binding proteins, it binds directly to 16S rRNA where it nucleates assembly of the head domain of the 30S subunit. Is located at the subunit interface close to the decoding center, probably blocks exit of the E-site tRNA. The protein is Small ribosomal subunit protein uS7 of Rhodopseudomonas palustris (strain BisB5).